The primary structure comprises 240 residues: UDP-2,3-diacylglucosamine hydrolase (240 aa).

Mn(2+) contacts are provided by Asp-8, His-10, Asp-41, Asn-79, and His-114. 79–80 (NR) serves as a coordination point for substrate. Positions 122, 160, 164, 167, and 195 each coordinate substrate. Residues His-195 and His-197 each coordinate Mn(2+).

This sequence belongs to the LpxH family. It depends on Mn(2+) as a cofactor.

The protein localises to the cell inner membrane. It carries out the reaction UDP-2-N,3-O-bis[(3R)-3-hydroxytetradecanoyl]-alpha-D-glucosamine + H2O = 2-N,3-O-bis[(3R)-3-hydroxytetradecanoyl]-alpha-D-glucosaminyl 1-phosphate + UMP + 2 H(+). It participates in glycolipid biosynthesis; lipid IV(A) biosynthesis; lipid IV(A) from (3R)-3-hydroxytetradecanoyl-[acyl-carrier-protein] and UDP-N-acetyl-alpha-D-glucosamine: step 4/6. Its function is as follows. Hydrolyzes the pyrophosphate bond of UDP-2,3-diacylglucosamine to yield 2,3-diacylglucosamine 1-phosphate (lipid X) and UMP by catalyzing the attack of water at the alpha-P atom. Involved in the biosynthesis of lipid A, a phosphorylated glycolipid that anchors the lipopolysaccharide to the outer membrane of the cell. The sequence is that of UDP-2,3-diacylglucosamine hydrolase from Shigella sonnei (strain Ss046).